Here is a 529-residue protein sequence, read N- to C-terminus: Delayed-rectifier potassium channel regulatory subunit KCNS1 (529 aa).

Residues 1-217 (MLMLLVRGTH…LTMENPGYSL (217 aa)) are Cytoplasmic-facing. The chain crosses the membrane as a helical span at residues 218-239 (PSKLFSCVSISVVLASIAAMCI). The Extracellular segment spans residues 240–270 (HSLPEYQAREAAAAVAAVAAGRSPEGVRDDP). A helical membrane pass occupies residues 271-293 (VLRRLEYFCIAWFSFEVSSRLLL). The Cytoplasmic portion of the chain corresponds to 294 to 304 (APSTRNFFCHP). Residues 305 to 322 (LNLIDIVSVLPFYLTLLA) form a helical membrane-spanning segment. Residues 323-340 (GVALGDQGGTGGKELGHL) are Extracellular-facing. The helical; Voltage-sensor transmembrane segment at 341-361 (GKVVQVFRLMRIFRVLKLARH) threads the bilayer. The Cytoplasmic segment spans residues 362–376 (STGLRSLGATLKHSY). A helical transmembrane segment spans residues 377 to 398 (REVGILLLYLAVGVSVFSGVAY). Topologically, residues 399–411 (TAEKEEDVGFNTI) are extracellular. The segment at residues 412 to 423 (PACWWWGTVSMT) is an intramembrane region (helical). The Selectivity filter motif lies at 424-429 (TVGYGD). An intramembrane segment occupies 424-431 (TVGYGDVV). At 432 to 438 (PVTVAGK) the chain is on the extracellular side. A helical transmembrane segment spans residues 439-467 (LAASGCILGGILVVALPITIIFNKFSHFY). Residues 468 to 529 (RRQKALEAAV…PSEPPHPQMY (62 aa)) lie on the Cytoplasmic side of the membrane. Residues 494–529 (GVSEASLETSRETSQEGRSADLETQAPSEPPHPQMY) are disordered. Residues 502 to 514 (TSRETSQEGRSAD) are compositionally biased toward basic and acidic residues.

Belongs to the potassium channel family. S (TC 1.A.1.2) subfamily. Kv9.1/KCNS1 sub-subfamily. Heterotetramer with KCNB1. Heterotetramer with KCNB2. Does not form homomultimers.

It localises to the cell membrane. Functionally, potassium channel regulatory subunit that modulate the delayed rectifier voltage-gated potassium channel activity of KCNB1 and KCNB2 by altering their kinetics, expression levels, and shifting the half-inactivation potential to more polarized values. While it does not form functional channels on its own, it can form functional heterotetrameric channels with KCNB1 and KCNB2. Each regulatory subunit has unique regulatory properties that can lead to extensive inhibition, significant changes in kinetics, and/or substantial shifts in the voltage dependencies of the inactivation process. The chain is Delayed-rectifier potassium channel regulatory subunit KCNS1 from Chlorocebus aethiops (Green monkey).